The following is a 721-amino-acid chain: Methionine--tRNA ligase (721 aa).

Residues 27 to 37 (PYANGQIHIGH) carry the 'HIGH' region motif. Residues Cys-158, Cys-161, Cys-171, and Cys-174 each coordinate Zn(2+). Residues 348–352 (KMSKS) carry the 'KMSKS' region motif. Position 351 (Lys-351) interacts with ATP. The 107-residue stretch at 615 to 721 (DFAKIDLRIA…SGAKPGMRVK (107 aa)) folds into the tRNA-binding domain.

The protein belongs to the class-I aminoacyl-tRNA synthetase family. MetG type 1 subfamily. Homodimer. Zn(2+) serves as cofactor.

It localises to the cytoplasm. It carries out the reaction tRNA(Met) + L-methionine + ATP = L-methionyl-tRNA(Met) + AMP + diphosphate. Is required not only for elongation of protein synthesis but also for the initiation of all mRNA translation through initiator tRNA(fMet) aminoacylation. This chain is Methionine--tRNA ligase, found in Burkholderia vietnamiensis (strain G4 / LMG 22486) (Burkholderia cepacia (strain R1808)).